Consider the following 200-residue polypeptide: Lipid A acyltransferase PagP (200 aa).

Residues 1 to 24 (MRLKLTSHTCLFALSSLLVTPAFA) form the signal peptide. Catalysis depends on residues His72, Asp115, and Ser116.

This sequence belongs to the lipid A palmitoyltransferase family. As to quaternary structure, homodimer.

It localises to the cell outer membrane. It catalyses the reaction a lipid A + a 1,2-diacyl-sn-glycero-3-phosphocholine = a hepta-acyl lipid A + a 2-acyl-sn-glycero-3-phosphocholine. It carries out the reaction a lipid IVA + a 1,2-diacyl-sn-glycero-3-phosphocholine = a lipid IVB + a 2-acyl-sn-glycero-3-phosphocholine. The catalysed reaction is a lipid IIA + a 1,2-diacyl-sn-glycero-3-phosphocholine = a lipid IIB + a 2-acyl-sn-glycero-3-phosphocholine. Transfers a fatty acid residue from the sn-1 position of a phospholipid to the N-linked hydroxyfatty acid chain on the proximal unit of lipid A or its precursors. This is Lipid A acyltransferase PagP from Dickeya dadantii (strain 3937) (Erwinia chrysanthemi (strain 3937)).